Consider the following 490-residue polypeptide: RNA-binding protein P (490 aa).

Residues 1 to 112 are disordered; the sequence is MGKKRKLDSK…EEEEAAERDA (112 aa). Residues 13-36 show a composition bias toward low complexity; the sequence is AAARSAAARAAAAAAAAAAAAAVA. Over residues 74–108 the composition is skewed to acidic residues; it reads GGEEEEVEEVEVEEEVEVDEDEDGEGEGEEEEEAA. 2 consecutive RRM domains span residues 156–233 and 267–343; these read RKIF…LASV and RKIF…QKAI.

Forms homodimers. Interacts with RBP-L and RBP-208. Interacts with NSF.

The protein resides in the nucleus. It localises to the cytoplasm. Its function is as follows. RNA-binding protein that binds to a cis-localization element or zipcode, within the 5'-CDS of prolamine RNA. Binds strongly to glutelin mRNA, particularly to 3'-UTR and zipcode RNA. Recognizes and binds to glutelin zipcode RNA, which is required for proper mRNA localization to cisternal endoplasmic reticulum. Exhibits strong binding activity to a glutelin intron sequence and may participate in mRNA splicing. Required for the correct localization of glutelin and prolamine mRNA in endosperm cells during grain development. RBP-P and RBP-L form a quaternary complex with the membrane trafficking factors NSF and RAB5A. This quaternay complex carries glutelin mRNAs for active transport on endosomes to the cortical endoplasmic reticulum membrane, and enables endosome-mediated glutelin mRNA transport in endosperm cells. The chain is RNA-binding protein P from Oryza sativa subsp. japonica (Rice).